The sequence spans 440 residues: tRNA-2-methylthio-N(6)-dimethylallyladenosine synthase (440 aa).

In terms of domain architecture, MTTase N-terminal spans 3 to 119 (KKFFIKTFGC…LPELINQAQA (117 aa)). [4Fe-4S] cluster-binding residues include cysteine 12, cysteine 48, cysteine 82, cysteine 158, cysteine 162, and cysteine 165. Positions 144–374 (RDNKYCAYVT…LELQKSILSE (231 aa)) constitute a Radical SAM core domain. Residues 377–437 (KKYEGTVQEV…PFSLEGELLE (61 aa)) enclose the TRAM domain.

Belongs to the methylthiotransferase family. MiaB subfamily. In terms of assembly, monomer. Requires [4Fe-4S] cluster as cofactor.

The protein localises to the cytoplasm. The catalysed reaction is N(6)-dimethylallyladenosine(37) in tRNA + (sulfur carrier)-SH + AH2 + 2 S-adenosyl-L-methionine = 2-methylsulfanyl-N(6)-dimethylallyladenosine(37) in tRNA + (sulfur carrier)-H + 5'-deoxyadenosine + L-methionine + A + S-adenosyl-L-homocysteine + 2 H(+). Catalyzes the methylthiolation of N6-(dimethylallyl)adenosine (i(6)A), leading to the formation of 2-methylthio-N6-(dimethylallyl)adenosine (ms(2)i(6)A) at position 37 in tRNAs that read codons beginning with uridine. This chain is tRNA-2-methylthio-N(6)-dimethylallyladenosine synthase, found in Aquifex aeolicus (strain VF5).